The chain runs to 240 residues: MSAAPASNGVFVVIPPNNASGLCPPPAILPTSMCQPPGIMQFEEPPLGAQTPRATQPPDLRPVETFLTGEPKVLGTVQILIGLIHLGFGSVLLMVRRGHVGIFFIEGGVPFWGGACFIISGSLSVAAEKNHTSCLVRSSLGTNILSVMAAFAGTAILLMDFGVTNRDVDRGYLAVLTIFTVLEFFTAVIAMHFGCQAIHAQASAPVIFLPNAFSADFNIPSPAASAPPAYDNVAYAQGVV.

The next 4 membrane-spanning stretches (helical) occupy residues 73-93 (VLGT…SVLL), 100-120 (VGIF…FIIS), 144-164 (ILSV…FGVT), and 173-193 (LAVL…AMHF).

The protein belongs to the MS4A family.

The protein localises to the membrane. Its function is as follows. May be involved in signal transduction as a component of a multimeric receptor complex. The polypeptide is Membrane-spanning 4-domains subfamily A member 15 (MS4A15) (Homo sapiens (Human)).